Here is a 298-residue protein sequence, read N- to C-terminus: GTPase Era (298 aa).

An Era-type G domain is found at 3–170; sequence KSGFVAILGR…VQLLKDNLEE (168 aa). The interval 11–18 is G1; the sequence is GRPNVGKS. 11-18 serves as a coordination point for GTP; it reads GRPNVGKS. Residues 37-41 form a G2 region; the sequence is QTTRN. The interval 58–61 is G3; it reads DTPG. Residues 58-62 and 120-123 contribute to the GTP site; these read DTPGI and NKID. The G4 stretch occupies residues 120 to 123; sequence NKID. The G5 stretch occupies residues 149–151; it reads ISA. The KH type-2 domain occupies 201–279; that stretch reads TQQEVPHSVA…YLETWVKVKK (79 aa).

This sequence belongs to the TRAFAC class TrmE-Era-EngA-EngB-Septin-like GTPase superfamily. Era GTPase family. In terms of assembly, monomer.

It is found in the cytoplasm. It localises to the cell membrane. In terms of biological role, an essential GTPase that binds both GDP and GTP, with rapid nucleotide exchange. Plays a role in 16S rRNA processing and 30S ribosomal subunit biogenesis and possibly also in cell cycle regulation and energy metabolism. The protein is GTPase Era of Streptococcus equi subsp. zooepidemicus (strain MGCS10565).